The chain runs to 1158 residues: ATP-dependent helicase/deoxyribonuclease subunit B (1158 aa).

8-15 provides a ligand contact to ATP; it reads GRAGTGKS. 4 residues coordinate [4Fe-4S] cluster: C791, C1112, C1115, and C1121.

This sequence belongs to the helicase family. AddB/RexB type 1 subfamily. Heterodimer of AddA and AddB. Mg(2+) is required as a cofactor. [4Fe-4S] cluster serves as cofactor.

The heterodimer acts as both an ATP-dependent DNA helicase and an ATP-dependent, dual-direction single-stranded exonuclease. Recognizes the chi site generating a DNA molecule suitable for the initiation of homologous recombination. The AddB subunit has 5' -&gt; 3' nuclease activity but not helicase activity. This Clostridium perfringens (strain ATCC 13124 / DSM 756 / JCM 1290 / NCIMB 6125 / NCTC 8237 / Type A) protein is ATP-dependent helicase/deoxyribonuclease subunit B.